We begin with the raw amino-acid sequence, 190 residues long: Pyridoxal 5'-phosphate synthase subunit PdxT (190 aa).

46–48 (GES) contributes to the L-glutamine binding site. Catalysis depends on cysteine 78, which acts as the Nucleophile. L-glutamine-binding positions include arginine 105 and 138–139 (IR). Residues histidine 174 and glutamate 176 each act as charge relay system in the active site.

It belongs to the glutaminase PdxT/SNO family. As to quaternary structure, in the presence of PdxS, forms a dodecamer of heterodimers. Only shows activity in the heterodimer.

The enzyme catalyses aldehydo-D-ribose 5-phosphate + D-glyceraldehyde 3-phosphate + L-glutamine = pyridoxal 5'-phosphate + L-glutamate + phosphate + 3 H2O + H(+). It catalyses the reaction L-glutamine + H2O = L-glutamate + NH4(+). It functions in the pathway cofactor biosynthesis; pyridoxal 5'-phosphate biosynthesis. Catalyzes the hydrolysis of glutamine to glutamate and ammonia as part of the biosynthesis of pyridoxal 5'-phosphate. The resulting ammonia molecule is channeled to the active site of PdxS. This chain is Pyridoxal 5'-phosphate synthase subunit PdxT, found in Bifidobacterium longum (strain NCC 2705).